We begin with the raw amino-acid sequence, 157 residues long: Protein Smg (157 aa).

The protein belongs to the Smg family.

The polypeptide is Protein Smg (Buchnera aphidicola subsp. Acyrthosiphon pisum (strain 5A)).